A 371-amino-acid chain; its full sequence is Queuine tRNA-ribosyltransferase (371 aa).

The Proton acceptor role is filled by aspartate 89. Substrate contacts are provided by residues 89 to 93 (DSGGF), aspartate 143, glutamine 185, and glycine 212. The segment at 243-249 (GVGKPED) is RNA binding. Catalysis depends on aspartate 262, which acts as the Nucleophile. The tract at residues 267 to 271 (TRNAR) is RNA binding; important for wobble base 34 recognition. Zn(2+)-binding residues include cysteine 300, cysteine 302, cysteine 305, and histidine 331.

It belongs to the queuine tRNA-ribosyltransferase family. Homodimer. Within each dimer, one monomer is responsible for RNA recognition and catalysis, while the other monomer binds to the replacement base PreQ1. Requires Zn(2+) as cofactor.

It carries out the reaction 7-aminomethyl-7-carbaguanine + guanosine(34) in tRNA = 7-aminomethyl-7-carbaguanosine(34) in tRNA + guanine. The protein operates within tRNA modification; tRNA-queuosine biosynthesis. Catalyzes the base-exchange of a guanine (G) residue with the queuine precursor 7-aminomethyl-7-deazaguanine (PreQ1) at position 34 (anticodon wobble position) in tRNAs with GU(N) anticodons (tRNA-Asp, -Asn, -His and -Tyr). Catalysis occurs through a double-displacement mechanism. The nucleophile active site attacks the C1' of nucleotide 34 to detach the guanine base from the RNA, forming a covalent enzyme-RNA intermediate. The proton acceptor active site deprotonates the incoming PreQ1, allowing a nucleophilic attack on the C1' of the ribose to form the product. After dissociation, two additional enzymatic reactions on the tRNA convert PreQ1 to queuine (Q), resulting in the hypermodified nucleoside queuosine (7-(((4,5-cis-dihydroxy-2-cyclopenten-1-yl)amino)methyl)-7-deazaguanosine). The sequence is that of Queuine tRNA-ribosyltransferase from Thioalkalivibrio sulfidiphilus (strain HL-EbGR7).